A 1164-amino-acid polypeptide reads, in one-letter code: Avirulence protein AvrBs3 (1164 aa).

Disordered regions lie at residues 1-68 (MDPI…SAGS) and 128-152 (ARPP…PAAQ). Over residues 131–141 (PRAKPAPRRRA) the composition is skewed to basic residues. Residues 142–151 (AQPSDASPAA) show a composition bias toward low complexity. The Cryptic repeat -1 repeat unit spans residues 225-254 (IVGVGKQWSGARALEALLTVAGELRGPPLQ). A Cryptic repeat 0 repeat occupies 255-288 (LDTGQLLKIAKRGGVTAVEAVHAWRNALTGAPLN). Core repeat repeat units follow at residues 289–322 (LTPE…QAHG), 323–356 (LTPQ…QAHG), 357–390 (LTPQ…QAHG), 391–424 (LTPE…QAHG), 425–458 (LTPE…QAHG), 459–492 (LTPE…QAHG), 493–526 (LTPE…QAHG), 527–560 (LTPE…QAHG), 561–594 (LTPE…QAHG), 595–628 (LTPQ…QAHG), 629–662 (LTPE…QAHG), 663–696 (LTPE…QAHG), 697–730 (LTPE…QAHG), 731–764 (LTPE…QAHG), 765–798 (LTPE…QAHG), 799–832 (LTPQ…QAHG), and 833–866 (LTPE…QAHG). Residues 867-886 (LTPQQVVAIASNGGGRPALE) form a Core repeat 17.5 repeat. The short motif at 1021–1024 (KRAK) is the Nuclear localization signal NLS1 element. Residues 1048–1060 (DLDAPSPMHEGDQ) are compositionally biased toward basic and acidic residues. Residues 1048–1091 (DLDAPSPMHEGDQTRASSRKRSRSDRAVTGPSAQQSFEVRVPEQ) form a disordered region. Positions 1067 to 1070 (KRSR) match the Nuclear localization signal NLS2 motif. Residues 1104 to 1107 (KRPR) carry the Nuclear localization signal NLS3 motif. Positions 1135–1164 (QDEDPFAGAADDFPAFNEEELAWLMELLPQ) are acidic activation domain AAD.

The protein belongs to the transcription activator-like effector (TALE) family. As to quaternary structure, forms a homodimer in the plant cell cytoplasm, prior to nuclear import. Interacts with the plant cell importin alpha-1 (Caimp alpha-1) and importin alpha-2 (Caimp alpha-2) via the nuclear localization signal NLS2, but not via NLS3.

The protein resides in the secreted. Its subcellular location is the host nucleus. Its function is as follows. Avirulence protein. Acts as a transcription factor in C.annuum plants. In susceptible plants lacking the Bs3 resistance gene induces expression of a number of genes, including genes homologous to a family of auxin-induced genes, alpha-expansin genes, pectate lyase, anthocyanidin glucoside rhamnosyl transferase and at least one transcription factor, UPA20. Their expression leads to plant hypertrophy in mesophyll cells, probably mainly mediated by UPA20. In resistant plants induces the hypersensitive response (HR), by inducing transcription of plant Bs3 which induces HR; a mutated AvrBs3 missing repeats 11-14 does not induce expression of Bs3 but does induce Bs3-E, a Bs3 allele with a modified promoter. Binds DNA corresponding to the upa-box in sequence-specific manner. The chain is Avirulence protein AvrBs3 (avrBs3) from Xanthomonas euvesicatoria.